The primary structure comprises 96 residues: Co-chaperonin GroES (96 aa).

The protein belongs to the GroES chaperonin family. Heptamer of 7 subunits arranged in a ring. Interacts with the chaperonin GroEL.

Its subcellular location is the cytoplasm. Its function is as follows. Together with the chaperonin GroEL, plays an essential role in assisting protein folding. The GroEL-GroES system forms a nano-cage that allows encapsulation of the non-native substrate proteins and provides a physical environment optimized to promote and accelerate protein folding. GroES binds to the apical surface of the GroEL ring, thereby capping the opening of the GroEL channel. This is Co-chaperonin GroES from Actinobacillus pleuropneumoniae serotype 3 (strain JL03).